The chain runs to 437 residues: Serine hydroxymethyltransferase (437 aa).

(6S)-5,6,7,8-tetrahydrofolate-binding positions include L130 and 134-136 (GHL). At K239 the chain carries N6-(pyridoxal phosphate)lysine.

This sequence belongs to the SHMT family. In terms of assembly, homodimer. Requires pyridoxal 5'-phosphate as cofactor.

The protein localises to the cytoplasm. It carries out the reaction (6R)-5,10-methylene-5,6,7,8-tetrahydrofolate + glycine + H2O = (6S)-5,6,7,8-tetrahydrofolate + L-serine. It participates in one-carbon metabolism; tetrahydrofolate interconversion. Its pathway is amino-acid biosynthesis; glycine biosynthesis; glycine from L-serine: step 1/1. Its function is as follows. Catalyzes the reversible interconversion of serine and glycine with tetrahydrofolate (THF) serving as the one-carbon carrier. This reaction serves as the major source of one-carbon groups required for the biosynthesis of purines, thymidylate, methionine, and other important biomolecules. Also exhibits THF-independent aldolase activity toward beta-hydroxyamino acids, producing glycine and aldehydes, via a retro-aldol mechanism. The sequence is that of Serine hydroxymethyltransferase from Bartonella tribocorum (strain CIP 105476 / IBS 506).